The sequence spans 113 residues: Hydrogenase maturation factor HypA (113 aa).

Histidine 2 provides a ligand contact to Ni(2+). Cysteine 73, cysteine 76, cysteine 89, and cysteine 92 together coordinate Zn(2+).

It belongs to the HypA/HybF family.

In terms of biological role, involved in the maturation of [NiFe] hydrogenases. Required for nickel insertion into the metal center of the hydrogenase. The sequence is that of Hydrogenase maturation factor HypA from Cereibacter sphaeroides (strain ATCC 17023 / DSM 158 / JCM 6121 / CCUG 31486 / LMG 2827 / NBRC 12203 / NCIMB 8253 / ATH 2.4.1.) (Rhodobacter sphaeroides).